The chain runs to 400 residues: Lysophospholipid transporter LplT (400 aa).

12 helical membrane-spanning segments follow: residues 19-39 (VIVA…ATLA), 53-73 (VLQM…GQIA), 91-111 (AGAA…LVGI), 139-159 (MMEA…GVLA), 164-184 (IAAL…NLFI), 195-213 (SWRL…VVLW), 227-247 (LFWG…PVAL), 257-277 (YLNA…AKLV), 281-301 (TVSR…IFSL), 304-324 (ALLP…FFVV), 352-372 (NSAM…GVPA), and 373-393 (VAIG…LWIW).

It belongs to the major facilitator superfamily. LplT (TC 2.A.1.42) family.

It is found in the cell inner membrane. In terms of biological role, catalyzes the facilitated diffusion of 2-acyl-glycero-3-phosphoethanolamine (2-acyl-GPE) into the cell. This is Lysophospholipid transporter LplT from Salmonella paratyphi B (strain ATCC BAA-1250 / SPB7).